The chain runs to 378 residues: MAFKSLIAFVALAAAVRAAPTAVCPDGTRVSHAACCAFIPLAQDLQETIFQNECGEDAHEVIRLTFHDAIAISRSQGPKAGGGADGSMLLFPTVEPNFSANNGIDDSVNNLIPFMQKHNTISAADLVQFAGAVALSNCPGAPRLEFLAGRPNKTIAAVDGLIPEPQDSVTKILQRFEDAGGFTPFEVVSLLASHSVARADKVDQTIDAAPFDSTPFTFDTQVFLEVLLKGVGFPGSANNTGEVASPLPLGSGSDTGEMRLQSDFALAHDPRTACIWQGFVNEQAFMAASFRAAMSKLAVLGHNRNSLIDCSDVVPVPKPATGQPAMFPASTGPQDLELSCPSERFPTLTTQPGASQSLIAHCPDGSMSCPGVQFNGPA.

An N-terminal signal peptide occupies residues 1-21; the sequence is MAFKSLIAFVALAAAVRAAPT. 5 disulfide bridges follow: Cys-24-Cys-36, Cys-35-Cys-310, Cys-54-Cys-138, Cys-274-Cys-340, and Cys-362-Cys-369. Residues Glu-56 and Glu-60 each contribute to the Mn(2+) site. His-67 functions as the Proton acceptor in the catalytic mechanism. Residues Asp-68, Gly-83, Asp-85, and Ser-87 each coordinate Ca(2+). Residues Asn-97 and Asn-152 are each glycosylated (N-linked (GlcNAc...) asparagine). His-194 contacts heme b. Ser-195 contributes to the Ca(2+) binding site. Residue Asp-200 coordinates Mn(2+). Asp-212, Thr-214, Thr-217, and Asp-219 together coordinate Ca(2+). N-linked (GlcNAc...) asparagine glycosylation is present at Asn-238.

Belongs to the peroxidase family. Ligninase subfamily. Ca(2+) is required as a cofactor. Heme b serves as cofactor.

Its subcellular location is the secreted. It catalyses the reaction 2 Mn(2+) + H2O2 + 2 H(+) = 2 Mn(3+) + 2 H2O. Its function is as follows. Catalyzes the oxidation of Mn(2+) to Mn(3+). The latter, acting as a diffusible redox mediator, is capable of oxidizing a variety of lignin compounds. This Phanerodontia chrysosporium (White-rot fungus) protein is Manganese peroxidase 1 (MNP1).